A 510-amino-acid polypeptide reads, in one-letter code: UDP-galactopyranose mutase (510 aa).

Residues Thr18, Asp38, Leu46, and Gly61 each contribute to the FAD site. UDP-alpha-D-galactose contacts are provided by Gly61 and Gly62. Residue His63 coordinates FAD. His68, Arg91, and Ser93 together coordinate NADH. Residues His68, Arg91, Ser93, and Tyr104 each contribute to the NADPH site. 7 residues coordinate UDP-alpha-D-galactose: Tyr104, Gln107, Met159, Tyr162, Asn163, Trp167, and Arg182. Asn203 provides a ligand contact to NADPH. Asn207 contacts UDP-alpha-D-galactose. Val242 serves as a coordination point for FAD. Positions 315 and 317 each coordinate NADPH. UDP-alpha-D-galactose is bound by residues Tyr317, Arg327, and Tyr419. Arg327 contacts FAD. NADH is bound by residues Tyr419 and Arg447. Residues Tyr419 and Arg447 each contribute to the NADPH site. Arg447 lines the FAD pocket. Residue Tyr453 participates in UDP-alpha-D-galactose binding. Residues Gly456, Asn457, and Gln458 each coordinate FAD. Asn457 provides a ligand contact to UDP-alpha-D-galactose. NADH is bound at residue Asn457. NADPH is bound at residue Asn457. His460 serves as a coordination point for NADPH. Ser461 provides a ligand contact to FAD.

The protein belongs to the UDP-galactopyranose/dTDP-fucopyranose mutase family. In terms of assembly, homotetramer. Requires FAD as cofactor.

The enzyme catalyses UDP-alpha-D-galactose = UDP-alpha-D-galactofuranose. In terms of biological role, UDP-galactopyranose mutase, key flavoenzyme of galactofuranose metabolism that catalyzes the 6-to-5 ring contraction of UDP-galactopyranose to UDP-galactofuranose, the donor used by various galacto-furanosyltransferases. Controls the biosynthesis of galactomannan and galactofuranose containing glycoconjugates. The flavin functions as nucleophile, forming a flavin-sugar adduct that facilitates galactose-ring opening and contraction. The binding of UDP-galactopyranose induces profound conformational changes in the enzyme and two loops on opposite sides of the active site move toward each other by over 10 Angstroms to cover the substrate and create a closed active site. This Aspergillus fumigatus (Neosartorya fumigata) protein is UDP-galactopyranose mutase.